The primary structure comprises 32 residues: Photosystem II reaction center protein T (32 aa).

A helical membrane pass occupies residues 3–23 (ALVYTFLLIGTLMVIFFAVFF).

It belongs to the PsbT family. As to quaternary structure, PSII is composed of 1 copy each of membrane proteins PsbA, PsbB, PsbC, PsbD, PsbE, PsbF, PsbH, PsbI, PsbJ, PsbK, PsbL, PsbM, PsbT, PsbX, PsbY, PsbZ, Psb30/Ycf12, at least 3 peripheral proteins of the oxygen-evolving complex and a large number of cofactors. It forms dimeric complexes.

It localises to the plastid. The protein localises to the chloroplast thylakoid membrane. Found at the monomer-monomer interface of the photosystem II (PS II) dimer, plays a role in assembly and dimerization of PSII. PSII is a light-driven water plastoquinone oxidoreductase, using light energy to abstract electrons from H(2)O, generating a proton gradient subsequently used for ATP formation. This chain is Photosystem II reaction center protein T, found in Trieres chinensis (Marine centric diatom).